A 357-amino-acid chain; its full sequence is Dihydroflavonol 4-reductase (357 aa).

Residues lysine 49 and tyrosine 168 each coordinate NADP(+).

Belongs to the NAD(P)-dependent epimerase/dehydratase family. Dihydroflavonol-4-reductase subfamily.

It carries out the reaction a (2R,3S,4S)-leucoanthocyanidin + NADP(+) = a (2R,3R)-dihydroflavonol + NADPH + H(+). The enzyme catalyses (2S)-flavan-4-ol + NADP(+) = (2S)-flavanone + NADPH + H(+). The protein operates within pigment biosynthesis; anthocyanin biosynthesis. Its function is as follows. Bifunctional enzyme involved in flavonoid metabolism. The polypeptide is Dihydroflavonol 4-reductase (A1) (Zea mays (Maize)).